The sequence spans 459 residues: Argininosuccinate lyase (459 aa).

This sequence belongs to the lyase 1 family. Argininosuccinate lyase subfamily.

The protein resides in the cytoplasm. The catalysed reaction is 2-(N(omega)-L-arginino)succinate = fumarate + L-arginine. It functions in the pathway amino-acid biosynthesis; L-arginine biosynthesis; L-arginine from L-ornithine and carbamoyl phosphate: step 3/3. The protein is Argininosuccinate lyase of Methylobacterium radiotolerans (strain ATCC 27329 / DSM 1819 / JCM 2831 / NBRC 15690 / NCIMB 10815 / 0-1).